Here is a 295-residue protein sequence, read N- to C-terminus: Beta-lactamase-like protein 2 homolog (295 aa).

Zn(2+) is bound by residues histidine 79, histidine 81, aspartate 83, histidine 84, histidine 141, aspartate 160, and histidine 195.

Belongs to the metallo-beta-lactamase superfamily. Glyoxalase II family.

The sequence is that of Beta-lactamase-like protein 2 homolog from Caenorhabditis elegans.